A 934-amino-acid chain; its full sequence is Oxysterol-binding protein-related protein 6 (934 aa).

The segment at 1–62 (MSSDEKGISP…RQLLEPEPVP (62 aa)) is disordered. Ser2 carries the post-translational modification N-acetylserine. Residues 14–29 (TSTPTHRSASSSTSSQ) are compositionally biased toward low complexity. Basic and acidic residues predominate over residues 30–40 (RDSRQSIHILE). A Phosphoserine modification is found at Ser35. Residues 42–53 (TASSSTEPSVSR) are compositionally biased toward polar residues. The region spanning 86–181 (PDKHEGFMLK…WVSKLRHHRL (96 aa)) is the PH domain. Phosphoserine occurs at positions 190 and 290.

This sequence belongs to the OSBP family. Homodimer. Interacts with OSBPL3. Expressed in brain and striated muscle (at protein level). Widely expressed. Expressed in skeletal muscle.

The protein resides in the cytoplasm. It is found in the cytosol. The protein localises to the endoplasmic reticulum membrane. Its subcellular location is the nucleus envelope. It localises to the cell membrane. The protein resides in the endosome membrane. In terms of biological role, regulates cellular transport and efflux of cholesterol. Plays a role in phosphatidylinositol-4-phophate (PI4P) turnover at the neuronal membrane. Binds via its PH domain PI4P, phosphatidylinositol-4,5-diphosphate, phosphatidylinositol-3,4,5-triphosphate, and phosphatidic acid. Weakly binds 25-hydroxycholesterol. This is Oxysterol-binding protein-related protein 6 (OSBPL6) from Homo sapiens (Human).